Reading from the N-terminus, the 210-residue chain is Large ribosomal subunit protein uL3 (210 aa).

The protein belongs to the universal ribosomal protein uL3 family. As to quaternary structure, part of the 50S ribosomal subunit. Forms a cluster with proteins L14 and L19.

Its function is as follows. One of the primary rRNA binding proteins, it binds directly near the 3'-end of the 23S rRNA, where it nucleates assembly of the 50S subunit. The polypeptide is Large ribosomal subunit protein uL3 (Amoebophilus asiaticus (strain 5a2)).